The sequence spans 377 residues: Chaperone protein DnaJ (377 aa).

The region spanning 4-69 (DYYEALGVTR…QKRAAYDRFG (66 aa)) is the J domain. The CR-type zinc finger occupies 135-213 (GKTAQIRVPT…CHGQGRVTQE (79 aa)). C148, C151, C165, C168, C187, C190, C201, and C204 together coordinate Zn(2+). CXXCXGXG motif repeat units lie at residues 148 to 155 (CDECSGSG), 165 to 172 (CTMCSGSG), 187 to 194 (CPGCNGRG), and 201 to 208 (CEKCHGQG).

This sequence belongs to the DnaJ family. As to quaternary structure, homodimer. Zn(2+) serves as cofactor.

The protein resides in the cytoplasm. Functionally, participates actively in the response to hyperosmotic and heat shock by preventing the aggregation of stress-denatured proteins and by disaggregating proteins, also in an autonomous, DnaK-independent fashion. Unfolded proteins bind initially to DnaJ; upon interaction with the DnaJ-bound protein, DnaK hydrolyzes its bound ATP, resulting in the formation of a stable complex. GrpE releases ADP from DnaK; ATP binding to DnaK triggers the release of the substrate protein, thus completing the reaction cycle. Several rounds of ATP-dependent interactions between DnaJ, DnaK and GrpE are required for fully efficient folding. Also involved, together with DnaK and GrpE, in the DNA replication of plasmids through activation of initiation proteins. This is Chaperone protein DnaJ from Brucella abortus (strain S19).